An 83-amino-acid polypeptide reads, in one-letter code: MSIFSYLLPKKQNTASVAKERLQIIVARERSTRGGPDYLPQLQEELLQVVRKYVPVDQDAVNVQVDRESGCEILELNITLPEG.

It belongs to the MinE family.

Functionally, prevents the cell division inhibition by proteins MinC and MinD at internal division sites while permitting inhibition at polar sites. This ensures cell division at the proper site by restricting the formation of a division septum at the midpoint of the long axis of the cell. The protein is Cell division topological specificity factor of Alcanivorax borkumensis (strain ATCC 700651 / DSM 11573 / NCIMB 13689 / SK2).